Reading from the N-terminus, the 234-residue chain is Probable cyclic nucleotide phosphodiesterase Rmag_0669 (234 aa).

Fe cation-binding residues include Asp11, His13, Asp49, Asn79, His145, His184, and His186. AMP contacts are provided by residues His13, Asp49, and Asn79–His80. His186 is an AMP binding site.

It belongs to the cyclic nucleotide phosphodiesterase class-III family. Fe(2+) is required as a cofactor.

This chain is Probable cyclic nucleotide phosphodiesterase Rmag_0669, found in Ruthia magnifica subsp. Calyptogena magnifica.